Consider the following 85-residue polypeptide: Small ribosomal subunit protein uS17 (85 aa).

The protein belongs to the universal ribosomal protein uS17 family. Part of the 30S ribosomal subunit.

Functionally, one of the primary rRNA binding proteins, it binds specifically to the 5'-end of 16S ribosomal RNA. This chain is Small ribosomal subunit protein uS17, found in Actinobacillus succinogenes (strain ATCC 55618 / DSM 22257 / CCUG 43843 / 130Z).